A 282-amino-acid polypeptide reads, in one-letter code: (4-alkanoyl-5-oxo-2,5-dihydrofuran-3-yl)methyl phosphate reductase (282 aa).

Residue Gly-6–Val-11 coordinates NADP(+).

Belongs to the NmrA-type oxidoreductase family.

It carries out the reaction a [(3S,4R)-4-alkanoyl-5-oxooxolan-3-yl]methyl phosphate + NADP(+) = a (4-alkanoyl-5-oxo-2,5-dihydrofuran-3-yl)methyl phosphate + NADPH + H(+). It catalyses the reaction [(3S,4R)-4-(6-methylheptanoyl)-5-oxooxolan-3-yl]methyl phosphate + NADP(+) = [4-(6-methylheptanoyl)-5-oxo-2H-furan-3-yl]methyl phosphate + NADPH + H(+). Functionally, involved in the biosynthesis of A factor (2-isocapryloyl-3R-hydroxymethyl-gamma-butyrolactone), a gamma-butyrolactone autoregulator that triggers secondary metabolism and morphogenesis in Streptomyces. Catalyzes the reduction of the butenolide phosphate produced by nonenzymatic intramolecular condensation of the 8-methyl-3-oxononanoyl-DHAP ester. In Streptomyces griseus subsp. griseus (strain JCM 4626 / CBS 651.72 / NBRC 13350 / KCC S-0626 / ISP 5235), this protein is (4-alkanoyl-5-oxo-2,5-dihydrofuran-3-yl)methyl phosphate reductase.